Here is a 187-residue protein sequence, read N- to C-terminus: Adenine phosphoribosyltransferase (187 aa).

The protein belongs to the purine/pyrimidine phosphoribosyltransferase family. Homodimer.

The protein resides in the cytoplasm. The catalysed reaction is AMP + diphosphate = 5-phospho-alpha-D-ribose 1-diphosphate + adenine. Its pathway is purine metabolism; AMP biosynthesis via salvage pathway; AMP from adenine: step 1/1. Catalyzes a salvage reaction resulting in the formation of AMP, that is energically less costly than de novo synthesis. This chain is Adenine phosphoribosyltransferase, found in Yersinia enterocolitica serotype O:8 / biotype 1B (strain NCTC 13174 / 8081).